Consider the following 367-residue polypeptide: Molybdopterin synthase catalytic subunit (367 aa).

Substrate-binding positions include 101–102 (HR), Lys-117, and 124–126 (KKE).

The protein belongs to the MoaE family. MOCS2B subfamily. In terms of assembly, heterotetramer; composed of 2 small (Mocs2A) and 2 large (Mocs2B) subunits.

It is found in the cytoplasm. It carries out the reaction 2 [molybdopterin-synthase sulfur-carrier protein]-C-terminal-Gly-aminoethanethioate + cyclic pyranopterin phosphate + H2O = molybdopterin + 2 [molybdopterin-synthase sulfur-carrier protein]-C-terminal Gly-Gly + 2 H(+). The protein operates within cofactor biosynthesis; molybdopterin biosynthesis. Its function is as follows. Catalytic subunit of the molybdopterin synthase complex, a complex that catalyzes the conversion of precursor Z into molybdopterin. Acts by mediating the incorporation of 2 sulfur atoms from thiocarboxylated Mocs2A into precursor Z to generate a dithiolene group. This is Molybdopterin synthase catalytic subunit from Drosophila erecta (Fruit fly).